A 153-amino-acid polypeptide reads, in one-letter code: Ubiquitin/ISG15-conjugating enzyme E2 L6 (153 aa).

The region spanning 2-149 is the UBC core domain; it reads MASKRVAKEL…AEEFTLKFGV (148 aa). The active-site Glycyl thioester intermediate is Cys86.

It belongs to the ubiquitin-conjugating enzyme family. As to quaternary structure, interacts with RNF19A, RNF19B and RNF144B. Interacts with FLT3 (tyrosine phosphorylated). Post-translationally, ISGylated.

The enzyme catalyses S-ubiquitinyl-[E1 ubiquitin-activating enzyme]-L-cysteine + [E2 ubiquitin-conjugating enzyme]-L-cysteine = [E1 ubiquitin-activating enzyme]-L-cysteine + S-ubiquitinyl-[E2 ubiquitin-conjugating enzyme]-L-cysteine.. It functions in the pathway protein modification; protein ubiquitination. Functionally, catalyzes the covalent attachment of ubiquitin or ISG15 to other proteins. Functions in the E6/E6-AP-induced ubiquitination of p53/TP53. Promotes ubiquitination and subsequent proteasomal degradation of FLT3. In Mus musculus (Mouse), this protein is Ubiquitin/ISG15-conjugating enzyme E2 L6 (Ube2l6).